Here is a 223-residue protein sequence, read N- to C-terminus: Glycerol-3-phosphate acyltransferase (223 aa).

5 helical membrane-spanning segments follow: residues 2-22 (LEIL…GLVI), 52-72 (WGVA…WLAF), 78-98 (PVFV…SCFM), 112-132 (IFLP…MLVI), and 153-173 (LAVS…AVVV). Positions 191–223 (WLKSKNKGAAAGNAAEGDDTQNMNPQDAGRKDG) are disordered.

This sequence belongs to the PlsY family. In terms of assembly, probably interacts with PlsX.

It localises to the cell inner membrane. The enzyme catalyses an acyl phosphate + sn-glycerol 3-phosphate = a 1-acyl-sn-glycero-3-phosphate + phosphate. The protein operates within lipid metabolism; phospholipid metabolism. In terms of biological role, catalyzes the transfer of an acyl group from acyl-phosphate (acyl-PO(4)) to glycerol-3-phosphate (G3P) to form lysophosphatidic acid (LPA). This enzyme utilizes acyl-phosphate as fatty acyl donor, but not acyl-CoA or acyl-ACP. The polypeptide is Glycerol-3-phosphate acyltransferase (Desulfovibrio desulfuricans (strain ATCC 27774 / DSM 6949 / MB)).